Reading from the N-terminus, the 75-residue chain is Beta-defensin 42 (75 aa).

The N-terminal stretch at Met-1–Cys-21 is a signal peptide. 3 disulfides stabilise this stretch: Cys-33-Cys-60, Cys-40-Cys-54, and Cys-44-Cys-61.

The protein belongs to the beta-defensin family. As to expression, epididymis-specific, with highest levels in the initial segment and distal caput.

The protein resides in the secreted. Has bactericidal activity. May play a role in the antimicrobial protection of sperm and urogenital tract epithelia. This chain is Beta-defensin 42, found in Mus musculus (Mouse).